The primary structure comprises 209 residues: Orotate phosphoribosyltransferase (209 aa).

5-phospho-alpha-D-ribose 1-diphosphate is bound by residues R96, K100, H102, and 122–130 (EDLISTGGS). Orotate is bound at residue S126.

It belongs to the purine/pyrimidine phosphoribosyltransferase family. PyrE subfamily. As to quaternary structure, homodimer. Requires Mg(2+) as cofactor.

It carries out the reaction orotidine 5'-phosphate + diphosphate = orotate + 5-phospho-alpha-D-ribose 1-diphosphate. Its pathway is pyrimidine metabolism; UMP biosynthesis via de novo pathway; UMP from orotate: step 1/2. Catalyzes the transfer of a ribosyl phosphate group from 5-phosphoribose 1-diphosphate to orotate, leading to the formation of orotidine monophosphate (OMP). This chain is Orotate phosphoribosyltransferase, found in Streptococcus sanguinis (strain SK36).